The chain runs to 323 residues: Putative divalent cation/proton antiporter TMEM165 (323 aa).

The first 33 residues, 1–33 (MAAAARGSGRAPTRRLLVLLLLQLLWAPAGVRA), serve as a signal peptide directing secretion. Topologically, residues 34 to 89 (GPEEDLSHRNQEPPAPAQQLQPQPAAVQGLEPARAEKGLTPVAPVHTNKEDAAAQT) are lumenal. Basic and acidic residues predominate over residues 35–44 (PEEDLSHRNQ). A disordered region spans residues 35–60 (PEEDLSHRNQEPPAPAQQLQPQPAAV). Over residues 50–59 (AQQLQPQPAA) the composition is skewed to low complexity. A helical transmembrane segment spans residues 90 to 110 (NLGFIHAFVAAISVIIVSELG). At 111 to 126 (DKTFFIAAIMAMRYNR) the chain is on the cytoplasmic side. The chain crosses the membrane as a helical span at residues 127–147 (LTVLAGAMLALALMTCLSVLF). Over 148 to 151 (GYAT) the chain is Lumenal. The helical transmembrane segment at 152 to 172 (TVIPRVYTYYVSTALFAIFGI) threads the bilayer. Residues 173-227 (RMLREGLKMSPDEGQEELEEVQAELKKKDEEFQRTKLLNGPDVETGTSTAIPQKK) are Cytoplasmic-facing. Positions 184–211 (DEGQEELEEVQAELKKKDEEFQRTKLLN) form a coiled coil. The chain crosses the membrane as a helical span at residues 228 to 248 (WLHFISPIFVQALTLTFLAEW). Topologically, residues 249 to 266 (GDRSQLTTIVLAAREDPY) are lumenal. The chain crosses the membrane as a helical span at residues 267–287 (GVAVGGTVGHCLCTGLAVIGG). The Cytoplasmic portion of the chain corresponds to 288-298 (RMIAQKISVRT). Residues 299-319 (VTIIGGIVFLAFAFSALFISP) form a helical membrane-spanning segment. Residues 320–323 (ESGF) are Lumenal-facing.

Belongs to the GDT1 family. Expressed in mammary epithelial cells (at protein level).

The protein localises to the golgi apparatus membrane. It catalyses the reaction Ca(2+)(in) + n H(+)(out) = Ca(2+)(out) + n H(+)(in). It carries out the reaction Mn(2+)(in) + n H(+)(out) = Mn(2+)(out) + n H(+)(in). Its function is as follows. Putative divalent cation:proton antiporter that exchanges calcium or manganese ions for protons across the Golgi membrane. Mediates the reversible transport of calcium or manganese to the Golgi lumen driven by the proton gradient and possibly the membrane potential generated by V-ATPase. Provides calcium or manganese cofactors to resident Golgi enzymes and contributes to the maintenance of an acidic luminal Golgi pH required for proper functioning of the secretory pathway. Promotes Ca(2+) storage within the Golgi lumen of the mammary epithelial cells to be then secreted into milk. The transport mechanism and stoichiometry remains to be elucidated. In Mus musculus (Mouse), this protein is Putative divalent cation/proton antiporter TMEM165.